The primary structure comprises 837 residues: Protein kintoun (837 aa).

Disordered regions lie at residues 100–119 (APSS…GSHW), 205–224 (LPGV…LPDF), 230–249 (YPAA…LQPA), and 363–515 (AAAP…GPGT). Pro residues predominate over residues 233–242 (APGPRAPSPP). Over residues 428–442 (GEERVPKPGEQDLSR) the composition is skewed to basic and acidic residues. The segment covering 445-459 (GSPPGSVEEPSPGGE) has biased composition (low complexity). Phosphoserine is present on residues S461 and S467. Residues 484-498 (ESARGDSSVETREES) show a composition bias toward basic and acidic residues. A phosphoserine mark is found at S640, S641, and S773.

The protein belongs to the PIH1 family. Kintoun subfamily. Interacts with CFAP300. Interacts with DNAAF4. Interacts with DNAAF6/PIH1D3. Interacts with DNAI2 and HSPA1A.

Its subcellular location is the cytoplasm. The protein resides in the dynein axonemal particle. Required for cytoplasmic pre-assembly of axonemal dyneins, thereby playing a central role in motility in cilia and flagella. Involved in pre-assembly of dynein arm complexes in the cytoplasm before intraflagellar transport loads them for the ciliary compartment. The polypeptide is Protein kintoun (Homo sapiens (Human)).